Consider the following 186-residue polypeptide: Ribosome-recycling factor (186 aa).

It belongs to the RRF family.

The protein resides in the cytoplasm. In terms of biological role, responsible for the release of ribosomes from messenger RNA at the termination of protein biosynthesis. May increase the efficiency of translation by recycling ribosomes from one round of translation to another. The polypeptide is Ribosome-recycling factor (Bordetella parapertussis (strain 12822 / ATCC BAA-587 / NCTC 13253)).